Consider the following 153-residue polypeptide: Large ribosomal subunit protein uL22 (153 aa).

The protein belongs to the universal ribosomal protein uL22 family. As to quaternary structure, part of the 50S ribosomal subunit.

In terms of biological role, this protein binds specifically to 23S rRNA. It makes multiple contacts with different domains of the 23S rRNA in the assembled 50S subunit and ribosome. Functionally, the globular domain of the protein is located near the polypeptide exit tunnel on the outside of the subunit, while an extended beta-hairpin is found that lines the wall of the exit tunnel in the center of the 70S ribosome. In Methanococcus maripaludis (strain C5 / ATCC BAA-1333), this protein is Large ribosomal subunit protein uL22.